The primary structure comprises 718 residues: Gephyrin (718 aa).

Positions 1 to 19 (MSNTLTTERNITNSPTAAQ) are enriched in polar residues. The disordered stretch occupies residues 1–26 (MSNTLTTERNITNSPTAAQLNEKESG). Residues 31-176 (EWIVGVLTTS…LPGSVKAIRE (146 aa)) are MPT Mo-transferase. A compositionally biased stretch (low complexity) spans 222–244 (NQNNQNNNNNNNNNNNNNNNNNS). Disordered stretches follow at residues 222 to 266 (NQNN…SSYN) and 344 to 364 (TGEN…NDDD). Over residues 245 to 254 (HNHHHHHHHS) the composition is skewed to basic residues. The interval 260-718 (KRGSSYNMTP…KAILIGPINN (459 aa)) is MPT adenylyltransferase.

The protein in the N-terminal section; belongs to the MoaB/Mog family. This sequence in the C-terminal section; belongs to the MoeA family. As to quaternary structure, homotrimer, homodimer and homooligomer. Mg(2+) is required as a cofactor.

The protein localises to the cell membrane. The protein resides in the cytoplasm. It localises to the cytosol. It is found in the cytoskeleton. It catalyses the reaction molybdopterin + ATP + H(+) = adenylyl-molybdopterin + diphosphate. The enzyme catalyses adenylyl-molybdopterin + molybdate = Mo-molybdopterin + AMP + H(+). It participates in cofactor biosynthesis; molybdopterin biosynthesis. Microtubule-associated protein involved in membrane protein-cytoskeleton interactions. Its function is as follows. Also has a catalytic activity and catalyzes two steps in the biosynthesis of the molybdenum cofactor. In the first step, molybdopterin is adenylated. Subsequently, molybdate is inserted into adenylated molybdopterin and AMP is released. This chain is Gephyrin (gphn), found in Dictyostelium discoideum (Social amoeba).